Here is a 155-residue protein sequence, read N- to C-terminus: Peptide methionine sulfoxide reductase MsrB (155 aa).

The 123-residue stretch at 15-137 folds into the MsrB domain; that stretch reads REALIATLNA…NSVSLTFIPT (123 aa). Zn(2+) contacts are provided by C54, C57, C103, and C106. Residue C126 is the Nucleophile of the active site.

It belongs to the MsrB Met sulfoxide reductase family. Zn(2+) serves as cofactor.

It catalyses the reaction L-methionyl-[protein] + [thioredoxin]-disulfide + H2O = L-methionyl-(R)-S-oxide-[protein] + [thioredoxin]-dithiol. The sequence is that of Peptide methionine sulfoxide reductase MsrB from Xylella fastidiosa (strain 9a5c).